Here is a 409-residue protein sequence, read N- to C-terminus: NADH-quinone oxidoreductase subunit D (409 aa).

The protein belongs to the complex I 49 kDa subunit family. NDH-1 is composed of 14 different subunits. Subunits NuoB, C, D, E, F, and G constitute the peripheral sector of the complex.

It is found in the cell inner membrane. It catalyses the reaction a quinone + NADH + 5 H(+)(in) = a quinol + NAD(+) + 4 H(+)(out). In terms of biological role, NDH-1 shuttles electrons from NADH, via FMN and iron-sulfur (Fe-S) centers, to quinones in the respiratory chain. The immediate electron acceptor for the enzyme in this species is believed to be ubiquinone. Couples the redox reaction to proton translocation (for every two electrons transferred, four hydrogen ions are translocated across the cytoplasmic membrane), and thus conserves the redox energy in a proton gradient. The protein is NADH-quinone oxidoreductase subunit D of Helicobacter acinonychis (strain Sheeba).